The primary structure comprises 2764 residues: Teneurin-2 (2764 aa).

The region spanning 1–375 (MDVKDRRHRS…KPSKYCSWKC (375 aa)) is the Teneurin N-terminal domain. Residues 1 to 379 (MDVKDRRHRS…YCSWKCAALS (379 aa)) are Cytoplasmic-facing. S90 and S124 each carry phosphoserine. The disordered stretch occupies residues 111-271 (TGSDADSDTE…HHHSSANSLN (161 aa)). The span at 141-155 (SSGLSSRENSALTLT) shows a compositional bias: polar residues. T155 carries the phosphothreonine modification. S157 carries the post-translational modification Phosphoserine. Over residues 159 to 168 (NENKSDDDNG) the composition is skewed to basic and acidic residues. The span at 174-188 (TSSSSLLPSAQLPSS) shows a compositional bias: low complexity. Residues 202–211 (DSNTSHQIMD) are compositionally biased toward polar residues. Over residues 229 to 240 (SGPQQASSSGPP) the composition is skewed to low complexity. The chain crosses the membrane as a helical span at residues 380-400 (AIAAALLLAILLAYFIAMHLL). Residues 401–2764 (GLNWQLQPAD…FLRQNEMGKR (2364 aa)) are Extracellular-facing. N-linked (GlcNAc...) asparagine glycosylation is found at N443 and N482. EGF-like domains follow at residues 575–603 (DCPRNCHGNGECVSGLCHCFPGFLGADCA), 598–634 (LGADCAKAACPVLCSGNGQYSKGTCQCYSGWKGAECD), 636–668 (PMNQCIDPSCGGHGSCIDGNCVCAAGYKGEHCE), 669–701 (EVDCLDPTCSSHGVCVNGECLCSPGWGGLNCEL), 702–735 (ARVQCPDQCSGHGTYLPDSGLCSCDPNWMGPDCS), 737–765 (VCSVDCGTHGVCIGGACRCEEGWTGAACD), 768–796 (VCHPRCIEHGTCKDGKCECREGWNGEHCT), and 798–831 (DGCPDLCNGNGRCTLGQNSWQCVCQTGWRGPGCN). Disulfide bonds link C576-C586, C580-C591, C593-C602, C611-C622, C624-C633, C640-C651, C645-C656, C658-C667, C672-C683, C677-C688, C690-C699, C710-C723, C725-C734, C738-C748, C742-C753, C755-C764, C769-C779, C773-C784, C786-C795, C800-C810, C804-C819, and C821-C830. Residues N915, N938, and N1257 are each glycosylated (N-linked (GlcNAc...) asparagine). NHL repeat units lie at residues 1262–1306 (LELR…VKSL), 1332–1376 (ARCG…NGII), 1391–1442 (LSCD…IAGR), 1464–1491 (LESASAIAISHTGVLYITETDEKKINRL), and 1520–1563 (CYSG…VSKN). The YD 1 repeat unit spans residues 1573–1592 (YEAASPGEQELYVFNADGIH). N1606 carries N-linked (GlcNAc...) asparagine glycosylation. YD repeat units follow at residues 1609–1629 (YSADNDVTELIDNNGNSLKIR), 1672–1691 (YDGNTGLLATKSDETGWTTF), and 1692–1714 (YDYDHEGRLTNVTRPTGVVTSLH). N1702, N1739, N1763, N1797, and N1882 each carry an N-linked (GlcNAc...) asparagine glycan. 18 YD repeats span residues 1885-1904 (YFFNGRLAGLQRGAMSERTD), 1926-1944 (YLDKSMVLLLQSQRQYIFE), 1945-1965 (YDSSDRLHAVTMPSVARHSMS), 1972-1989 (YIRNIYNPPESNASVIFD), 1990-2011 (YSDDGRILKTSFLGTGRQVFYK), 2012-2029 (YGKLSKLSEIVYDSTAVT), 2032-2052 (YDETTGVLKMVNLQSGGFSCT), 2055-2075 (YRKVGPLVDKQIYRFSEEGMI), 2083-2103 (YHDNSFRIASIKPVISETPLP), 2109-2126 (YDEISGKVEHFGKFGVIY), 2127-2153 (YDINQIITTAVMTLSKHFDTHGRIKEV), 2155-2168 (YEMFRSLMYWMTVQ), 2169-2192 (YDSMGRVIKRELKLGPYANTTKYT), 2195-2215 (YDGDGQLQSVAVNDRPTWRYS), 2216-2236 (YDLNGNLHLLNPGNSARLMPL), 2238-2258 (YDLRDRITRLGDVQYKIDDDG), 2270-2290 (YNSKGLLTRAYNKASGWSVQY), and 2292-2312 (YDGVGRRASYKTNLGHHLQYF). Residue N1983 is glycosylated (N-linked (GlcNAc...) asparagine). N-linked (GlcNAc...) asparagine glycosylation is present at N2187. The N-linked (GlcNAc...) asparagine glycan is linked to N2327. A YD 23 repeat occupies 2338–2379 (YDLQGHLFAMESSSGEEYYVASDNTGTPLAVYSINGLMIKQL). N-linked (GlcNAc...) asparagine glycosylation is present at N2638.

The protein belongs to the tenascin family. Teneurin subfamily. In terms of assembly, homodimer; disulfide-linked. Heterodimer with either TENM1 or TENM3. May also form heterodimer with TENM4. Post-translationally, derives from the membrane form by proteolytic processing. In terms of processing, derives from the plasma membrane form by proteolytic cleavage and translocates to the nucleus. Homophilic binding of the C-terminal extracellular domain stimulates its proteolytic cleavage and release in the cytoplasmic. Is subjected to rapid degradation by the proteasome pathway. As to expression, expressed in the cortex, CA1, CA2, CA3, dentate gyrus and granular layer of the hippocampus. Expressed in the Purkinje cells and molecular layer of the cerebellum.

It is found in the cell membrane. The protein resides in the presynaptic cell membrane. Its subcellular location is the postsynaptic cell membrane. It localises to the endoplasmic reticulum. The protein localises to the golgi apparatus. It is found in the synapse. The protein resides in the cell projection. Its subcellular location is the dendritic spine. It localises to the filopodium. The protein localises to the growth cone. It is found in the nucleus. The protein resides in the PML body. Involved in neural development, regulating the establishment of proper connectivity within the nervous system. Acts as a ligand of the ADGRL1 and ADGRL3 receptors that are expressed at the surface of adjacent cells. Promotes the formation of filopodia and enlarged growth cone in neuronal cells. Mediates axon guidance and homophilic and heterophilic cell-cell adhesion. May function as a cellular signal transducer. In terms of biological role, induces gene transcription inhibition. The polypeptide is Teneurin-2 (Tenm2) (Mus musculus (Mouse)).